The sequence spans 129 residues: Small ribosomal subunit protein uS11 (129 aa).

Belongs to the universal ribosomal protein uS11 family. As to quaternary structure, part of the 30S ribosomal subunit. Interacts with proteins S7 and S18. Binds to IF-3.

In terms of biological role, located on the platform of the 30S subunit, it bridges several disparate RNA helices of the 16S rRNA. Forms part of the Shine-Dalgarno cleft in the 70S ribosome. The protein is Small ribosomal subunit protein uS11 of Jannaschia sp. (strain CCS1).